A 179-amino-acid chain; its full sequence is MNELKQKYQDEIVSSLMDKFNYNSVMEVPKVEKIVINMGVGDAVQNSKALDSAVEELSLISGQKPMITRAKKSIAGFRLREGMPIGAKVTLRGERMYEFLQKLVAVSLPRVRDFRGISKKAFDGRGNYTLGVKEQLIFPEINYDKVSKIRGMDIVVVTTSNTDEEARELLAQLGMPFQK.

The protein belongs to the universal ribosomal protein uL5 family. In terms of assembly, part of the 50S ribosomal subunit; part of the 5S rRNA/L5/L18/L25 subcomplex. Contacts the 5S rRNA and the P site tRNA. Forms a bridge to the 30S subunit in the 70S ribosome.

Functionally, this is one of the proteins that bind and probably mediate the attachment of the 5S RNA into the large ribosomal subunit, where it forms part of the central protuberance. In the 70S ribosome it contacts protein S13 of the 30S subunit (bridge B1b), connecting the 2 subunits; this bridge is implicated in subunit movement. Contacts the P site tRNA; the 5S rRNA and some of its associated proteins might help stabilize positioning of ribosome-bound tRNAs. This Oceanobacillus iheyensis (strain DSM 14371 / CIP 107618 / JCM 11309 / KCTC 3954 / HTE831) protein is Large ribosomal subunit protein uL5.